We begin with the raw amino-acid sequence, 404 residues long: MPGIAIIGAQWGDEGKGKITDFLAPQADYVVRYQGGANAGHTVTAKGQTFKLNLLPSGVLHPGTVSILGDGMVIDPEKFLAERQNLLDGGLQPELRISDRAHLVLPHHKFVDGRKDFVGTTGRGIGPAYADRARRVGIRFGDLADESVLRERVERLLEAKPNSTRDAGWTSVTDALGYLLPIRDALLPFVGDTGAQLRQAIREGRNVLFEGAQATLLDLNYGTYPFVTSSHPTVGGILVGAGVNHKAINKVYGVAKAFNTRVGHGPFPTEVFGEMETRLRGDGSNPWDEFGTTTGRARRVGWLDLALLKYAVDVNGLDGLVINKMDILAGLDTVKVGVGYNAAGQPVYRELPGWATTAGAESRATLPKEAQAYLDLIEETVNCPVVIFSCGPAREQTYGAVSWD.

GTP is bound by residues Gly12–Lys18 and Gly40–Thr42. Asp13 (proton acceptor) is an active-site residue. 2 residues coordinate Mg(2+): Asp13 and Gly40. IMP is bound by residues Asp13–Lys16, Asn38–His41, Thr121, Arg135, Gln213, Thr228, and Arg296. His41 functions as the Proton donor in the catalytic mechanism. Thr292–Arg298 contacts substrate. GTP-binding positions include Arg298, Lys324–Asp326, and Ser389–Gly391.

This sequence belongs to the adenylosuccinate synthetase family. As to quaternary structure, homodimer. It depends on Mg(2+) as a cofactor.

The protein localises to the cytoplasm. It catalyses the reaction IMP + L-aspartate + GTP = N(6)-(1,2-dicarboxyethyl)-AMP + GDP + phosphate + 2 H(+). Its pathway is purine metabolism; AMP biosynthesis via de novo pathway; AMP from IMP: step 1/2. Plays an important role in the de novo pathway of purine nucleotide biosynthesis. Catalyzes the first committed step in the biosynthesis of AMP from IMP. In Deinococcus geothermalis (strain DSM 11300 / CIP 105573 / AG-3a), this protein is Adenylosuccinate synthetase.